Here is a 605-residue protein sequence, read N- to C-terminus: Elongation factor 4 (605 aa).

A tr-type G domain is found at 11 to 193 (KRIRNFSIIA…RIVTQISPPK (183 aa)). Residues 23–28 (DHGKST) and 140–143 (NKVD) contribute to the GTP site.

Belongs to the TRAFAC class translation factor GTPase superfamily. Classic translation factor GTPase family. LepA subfamily.

It localises to the cell membrane. It catalyses the reaction GTP + H2O = GDP + phosphate + H(+). Its function is as follows. Required for accurate and efficient protein synthesis under certain stress conditions. May act as a fidelity factor of the translation reaction, by catalyzing a one-codon backward translocation of tRNAs on improperly translocated ribosomes. Back-translocation proceeds from a post-translocation (POST) complex to a pre-translocation (PRE) complex, thus giving elongation factor G a second chance to translocate the tRNAs correctly. Binds to ribosomes in a GTP-dependent manner. In Phytoplasma australiense, this protein is Elongation factor 4.